A 258-amino-acid chain; its full sequence is MIEKDFVVEGLRRTRIDEYLEKELERAGYGGMDVQVTPMGTMVVVYAERPGMVIGRGGKTVRAITQKLKNKFDLENPQVEVKEVDVPELNPKIMAHKIAAMLQRGMHFRRVAYTTMRRIMAAGAQGVEVTISGKIRGARSATAKFTDGYIKKCGEPSVKHVREGFATVQLKPGVLGVYVRIMPPDVVLPDKVEIEDPRVTETPAEEASEASEVVEDLEEVEDLEEIEDLEEVEDLEEVEDLEDTEAEKKDADGEESEK.

The 70-residue stretch at 16 to 85 (IDEYLEKELE…NPQVEVKEVD (70 aa)) folds into the KH type-2 domain. The interval 198-258 (RVTETPAEEA…KDADGEESEK (61 aa)) is disordered. A compositionally biased stretch (acidic residues) spans 203-245 (PAEEASEASEVVEDLEEVEDLEEIEDLEEVEDLEEVEDLEDTE).

This sequence belongs to the universal ribosomal protein uS3 family. As to quaternary structure, part of the 30S ribosomal subunit.

In terms of biological role, binds the lower part of the 30S subunit head. In Methanothermobacter thermautotrophicus (strain ATCC 29096 / DSM 1053 / JCM 10044 / NBRC 100330 / Delta H) (Methanobacterium thermoautotrophicum), this protein is Small ribosomal subunit protein uS3.